The chain runs to 281 residues: N-acetylmuramic acid 6-phosphate etherase (281 aa).

An SIS domain is found at 63 to 226; it reads IVPRMKQGGR…TTSVMIQLGR (164 aa). The Proton donor role is filled by Glu91. Residue Glu122 is part of the active site.

This sequence belongs to the GCKR-like family. MurNAc-6-P etherase subfamily. In terms of assembly, homodimer.

It carries out the reaction N-acetyl-D-muramate 6-phosphate + H2O = N-acetyl-D-glucosamine 6-phosphate + (R)-lactate. It participates in amino-sugar metabolism; N-acetylmuramate degradation. Specifically catalyzes the cleavage of the D-lactyl ether substituent of MurNAc 6-phosphate, producing GlcNAc 6-phosphate and D-lactate. This Bacteroides fragilis (strain ATCC 25285 / DSM 2151 / CCUG 4856 / JCM 11019 / LMG 10263 / NCTC 9343 / Onslow / VPI 2553 / EN-2) protein is N-acetylmuramic acid 6-phosphate etherase.